We begin with the raw amino-acid sequence, 101 residues long: Small ribosomal subunit protein eS24 (101 aa).

The protein belongs to the eukaryotic ribosomal protein eS24 family.

In Methanocaldococcus jannaschii (strain ATCC 43067 / DSM 2661 / JAL-1 / JCM 10045 / NBRC 100440) (Methanococcus jannaschii), this protein is Small ribosomal subunit protein eS24.